A 332-amino-acid polypeptide reads, in one-letter code: MAKVYIDKDASLDPIKDKTIAVLGYGSQGRAWALNLRDSGLKVLVGLEREGNSWKVAESDGFNPMHTEDAVKKSDIVIFLVPDMVQRYVYRERVAPYLRDGMDLVFAHGFNIHYKLIEPPKTVDVYMIAPKGPGPIVREYFAKGGGVPALVAVHQNYSGKAFEKALAIAKALGATRAGVIETTFKEETETDLFGEQVDLVGGITQLMRTAFQVLVEAGYQPEIAYYETINEMKMIVDLIYEKGFTGMLKAVSETAKYGGFTAGKYVINEDVKKRMKEVLDRIRSGKFAEEWIEEYNKGAPTLVNGMKEVENSLEEQVGRQIREISLRGKPKS.

Residues 2–182 (AKVYIDKDAS…GATRAGVIET (181 aa)) enclose the KARI N-terminal Rossmann domain. NADP(+)-binding positions include 25-28 (YGSQ), serine 53, and 83-86 (DMVQ). Histidine 108 is an active-site residue. Residue glycine 134 coordinates NADP(+). One can recognise a KARI C-terminal knotted domain in the interval 183–328 (TFKEETETDL…RQIREISLRG (146 aa)). Mg(2+) contacts are provided by aspartate 191, glutamate 195, glutamate 227, and glutamate 231. Position 252 (serine 252) interacts with substrate.

This sequence belongs to the ketol-acid reductoisomerase family. It depends on Mg(2+) as a cofactor.

It catalyses the reaction (2R)-2,3-dihydroxy-3-methylbutanoate + NADP(+) = (2S)-2-acetolactate + NADPH + H(+). The catalysed reaction is (2R,3R)-2,3-dihydroxy-3-methylpentanoate + NADP(+) = (S)-2-ethyl-2-hydroxy-3-oxobutanoate + NADPH + H(+). Its pathway is amino-acid biosynthesis; L-isoleucine biosynthesis; L-isoleucine from 2-oxobutanoate: step 2/4. It participates in amino-acid biosynthesis; L-valine biosynthesis; L-valine from pyruvate: step 2/4. Its function is as follows. Involved in the biosynthesis of branched-chain amino acids (BCAA). Catalyzes an alkyl-migration followed by a ketol-acid reduction of (S)-2-acetolactate (S2AL) to yield (R)-2,3-dihydroxy-isovalerate. In the isomerase reaction, S2AL is rearranged via a Mg-dependent methyl migration to produce 3-hydroxy-3-methyl-2-ketobutyrate (HMKB). In the reductase reaction, this 2-ketoacid undergoes a metal-dependent reduction by NADPH to yield (R)-2,3-dihydroxy-isovalerate. The polypeptide is Ketol-acid reductoisomerase (NADP(+)) (Sulfurisphaera tokodaii (strain DSM 16993 / JCM 10545 / NBRC 100140 / 7) (Sulfolobus tokodaii)).